A 181-amino-acid polypeptide reads, in one-letter code: Cyclic AMP-dependent transcription factor ATF-3 (181 aa).

A Glycyl lysine isopeptide (Lys-Gly) (interchain with G-Cter in SUMO2) cross-link involves residue Lys-78. A bZIP domain is found at 86-149 (DERKKRRRER…QHLIYMLNLH (64 aa)). The segment at 88 to 110 (RKKRRRERNKIAAAKCRNKKKEK) is basic motif. Residues 114–142 (LQKESEKLESVNAELKAQIEELKNEKQHL) are leucine-zipper. Thr-162 carries the phosphothreonine modification. Lys-175 participates in a covalent cross-link: Glycyl lysine isopeptide (Lys-Gly) (interchain with G-Cter in SUMO2).

Belongs to the bZIP family. ATF subfamily. As to quaternary structure, binds DNA as a homodimer or a heterodimer. Interacts with KAT5; promoting KAT5 autoacetylation and KAT5 deubiquitination by USP7.

The protein localises to the nucleus. Functionally, this protein binds the cAMP response element (CRE) (consensus: 5'-GTGACGT[AC][AG]-3'), a sequence present in many viral and cellular promoters. Represses transcription from promoters with ATF sites. It may repress transcription by stabilizing the binding of inhibitory cofactors at the promoter. In terms of biological role, activates transcription presumably by sequestering inhibitory cofactors away from the promoters. Its function is as follows. Stress-induced isoform, counteracts the transcriptional repression of isoform 1. The sequence is that of Cyclic AMP-dependent transcription factor ATF-3 from Homo sapiens (Human).